Here is a 92-residue protein sequence, read N- to C-terminus: MSLRRIPNKNLIPEIPPFPEESINLLQNGVNTIPRINLEDVDVMSTKLPTDEELTENYQNWKKNLEVERLEKLKRIAPGYSASSPLLPSKSD.

This is an uncharacterized protein from Schizosaccharomyces pombe (strain 972 / ATCC 24843) (Fission yeast).